Consider the following 2375-residue polypeptide: CCR4-NOT transcription complex subunit 1 (2375 aa).

Short sequence motifs (LXXLL) lie at residues 153–157 (LPDLL), 181–185 (LHLLL), and 223–227 (LAPLL). Serine 318 bears the Phosphoserine mark. Residues 570–574 (LSMLL) carry the LXXLL motif. A disordered region spans residues 725–770 (SAAPHTQSMQGFPPNLGSAFSTPQSPAKAFPPLSTPNQTTAFSGIG). Residues 799–1014 (NNDPFVQRKL…QGSITTPGSI (216 aa)) form an interaction with ZFP36 region. Serine 1060 is modified (phosphoserine). Positions 1089–1604 (EPPENIQEKI…AQPMKQAWAT (516 aa)) are interaction with CNOT6, CNOT6L, CNOT7 and CNOT8. Over residues 1314–1326 (QLSAPKKDVKQPE) the composition is skewed to basic and acidic residues. The interval 1314-1351 (QLSAPKKDVKQPEELPAITTTTTSTTPATSTTCTATVP) is disordered. Residues 1332 to 1349 (TTTTTSTTPATSTTCTAT) show a composition bias toward low complexity. Short sequence motifs (LXXLL) lie at residues 1638–1642 (LRSLL), 1941–1945 (LIALL), and 2095–2099 (LRVLL).

Belongs to the CNOT1 family. As to quaternary structure, component of the CCR4-NOT complex; distinct complexes seem to exist that differ in the participation of probably mutually exclusive catalytic subunits. In the complex, interacts directly with CNOT6, CNOT6L, CNOT7 or CNOT8. Interacts in a ligand-dependent fashion with ESR1 and RXRA. Interacts with NANOS2, TOB1 and ZFP36. Interacts with TNRC6A, TNRC6B or TNRC6C; the interactions are direct. Interacts with YTHDF2; the interaction is direct and promotes recruitment of the CCR4-NOT complex to N6-methyladenosine (m6A)-containing mRNAs, leading to their deadenylation and subsequent degradation. Interacts with EIF4ENIF1/4E-T. Interacts in an RNA-independent manner with BICC1 (via KH domains). Interacts with TEX13A; the interaction may inhibit CNOT1 binding to mRNA and subsequently CNOT1-mediated mRNA degradation.

The protein localises to the cytoplasm. It localises to the P-body. Its subcellular location is the nucleus. Functionally, scaffolding component of the CCR4-NOT complex which is one of the major cellular mRNA deadenylases and is linked to various cellular processes including bulk mRNA degradation, miRNA-mediated repression, translational repression during translational initiation and general transcription regulation. Additional complex functions may be a consequence of its influence on mRNA expression. Its scaffolding function implies its interaction with the catalytic complex module and diverse RNA-binding proteins mediating the complex recruitment to selected mRNA 3'UTRs. Involved in degradation of AU-rich element (ARE)-containing mRNAs probably via association with ZFP36. Mediates the recruitment of the CCR4-NOT complex to miRNA targets and to the RISC complex via association with TNRC6A, TNRC6B or TNRC6C. Acts as a transcriptional repressor. Represses the ligand-dependent transcriptional activation by nuclear receptors. Involved in the maintenance of embryonic stem (ES) cell identity; prevents their differentiation towards extraembryonic trophectoderm lineages. Plays a role in rapid sperm motility via mediating timely mRNA turnover. The chain is CCR4-NOT transcription complex subunit 1 (Cnot1) from Mus musculus (Mouse).